The chain runs to 66 residues: Small ribosomal subunit protein eS27 (66 aa).

The Zn(2+) site is built by cysteine 21, cysteine 24, cysteine 40, and cysteine 43. A C4-type zinc finger spans residues 21 to 43 (CPNCGNEQTVFSHATFPVRCLSC).

The protein belongs to the eukaryotic ribosomal protein eS27 family. Part of the 30S ribosomal subunit. It depends on Zn(2+) as a cofactor.

In Sulfurisphaera tokodaii (strain DSM 16993 / JCM 10545 / NBRC 100140 / 7) (Sulfolobus tokodaii), this protein is Small ribosomal subunit protein eS27.